A 544-amino-acid chain; its full sequence is Membrane protein insertase YidC (544 aa).

Transmembrane regions (helical) follow at residues 6–26 (NILLIGLLFVSFLLWQQWQTD), 345–365 (LLMFFQSIVGNWGAAIILITL), 423–443 (GGCLPILLQMPIFIALYWVLL), 460–480 (LSVQDPYYVMPILMGVSMFVM), and 503–523 (VVFTVFFLWFPAGLVLYWLVG).

Belongs to the OXA1/ALB3/YidC family. Type 1 subfamily. In terms of assembly, interacts with the Sec translocase complex via SecD. Specifically interacts with transmembrane segments of nascent integral membrane proteins during membrane integration.

The protein resides in the cell inner membrane. Functionally, required for the insertion and/or proper folding and/or complex formation of integral membrane proteins into the membrane. Involved in integration of membrane proteins that insert both dependently and independently of the Sec translocase complex, as well as at least some lipoproteins. Aids folding of multispanning membrane proteins. This chain is Membrane protein insertase YidC, found in Shewanella woodyi (strain ATCC 51908 / MS32).